Here is a 377-residue protein sequence, read N- to C-terminus: Succinyl-diaminopimelate desuccinylase (377 aa).

Zn(2+) is bound at residue histidine 68. The active site involves aspartate 70. Aspartate 101 is a Zn(2+) binding site. Glutamate 135 (proton acceptor) is an active-site residue. Glutamate 136, glutamate 164, and histidine 350 together coordinate Zn(2+).

This sequence belongs to the peptidase M20A family. DapE subfamily. Homodimer. Zn(2+) serves as cofactor. The cofactor is Co(2+).

It carries out the reaction N-succinyl-(2S,6S)-2,6-diaminopimelate + H2O = (2S,6S)-2,6-diaminopimelate + succinate. Its pathway is amino-acid biosynthesis; L-lysine biosynthesis via DAP pathway; LL-2,6-diaminopimelate from (S)-tetrahydrodipicolinate (succinylase route): step 3/3. Its function is as follows. Catalyzes the hydrolysis of N-succinyl-L,L-diaminopimelic acid (SDAP), forming succinate and LL-2,6-diaminopimelate (DAP), an intermediate involved in the bacterial biosynthesis of lysine and meso-diaminopimelic acid, an essential component of bacterial cell walls. The protein is Succinyl-diaminopimelate desuccinylase of Psychromonas ingrahamii (strain DSM 17664 / CCUG 51855 / 37).